A 377-amino-acid polypeptide reads, in one-letter code: MKTLPLFVCICALSACFSFSEGRERDHELRHRRHHHQSPKSHFELPHYPGLLAHQKPFIRKSYKCLHKRCRPKLPPSPNNPPKFPNPHQPPKHPDKNSSVVNPTLVATTQIPSVTFPSASTKITTLPNVTFLPQNATTISSRENVNTSSSVATLAPVNSPAPQDTTAAPPTPSATTPAPPSSSAPPETTAAPPTPSATTQAPPSSSAPPETTAAPPTPPATTPAPPSSSAPPETTAAPPTPSATTPAPLSSSAPPETTAVPPTPSATTLDPSSASAPPETTAAPPTPSATTPAPPSSPAPQETTAAPITTPNSSPTTLAPDTSETSAAPTHQTTTSVTTQTTTTKQPTSAPGQNKISRFLLYMKNLLNRIIDDMVEQ.

An N-terminal signal peptide occupies residues 1 to 22; sequence MKTLPLFVCICALSACFSFSEG. The interval 70–100 is disordered; that stretch reads CRPKLPPSPNNPPKFPNPHQPPKHPDKNSSV. Pro residues predominate over residues 73 to 89; the sequence is KLPPSPNNPPKFPNPHQ. N-linked (GlcNAc...) asparagine glycans are attached at residues N97, N128, N135, and N146. Residues 150–355 are disordered; the sequence is SVATLAPVNS…QPTSAPGQNK (206 aa). 6 tandem repeats follow at residues 165–187, 188–210, 211–233, 234–256, 257–279, and 280–302. Pro residues predominate over residues 169–183; that stretch reads PPTPSATTPAPPSSS. An O-linked (GalNAc) threonine; by GALNT13 glycan is attached at T176. 2 O-linked (GalNAc) serine; by GALNT13 glycosylation sites follow: S182 and S183. Over residues 184–214 the composition is skewed to low complexity; that stretch reads APPETTAAPPTPSATTQAPPSSSAPPETTAA. O-linked (GalNAc) threonine; by GALNT13 glycosylation is found at T188 and T189. The span at 215–229 shows a compositional bias: pro residues; the sequence is PPTPPATTPAPPSSS. Residues 230–283 show a composition bias toward low complexity; sequence APPETTAAPPTPSATTPAPLSSSAPPETTAVPPTPSATTLDPSSASAPPETTAA. The span at 284-298 shows a compositional bias: pro residues; the sequence is PPTPSATTPAPPSSP. The segment covering 309–329 has biased composition (polar residues); that stretch reads TTPNSSPTTLAPDTSETSAAP. The segment covering 330–348 has biased composition (low complexity); that stretch reads THQTTTSVTTQTTTTKQPT.

As to quaternary structure, monomer. In terms of processing, N- and O-glycosylated. Contains fucose, mannose, galactose, N-acetylglucosamine and N-acetylgalactosamine. Expressed in salivary gland tissues and only in those that contain mucous acinar cells (e.g. sublingual and submandibular glands) and not in salivary glands containing only serous acinar cells (e.g. parotid gland).

It localises to the secreted. May function in a protective capacity by promoting the clearance of bacteria in the oral cavity and aiding in mastication, speech, and swallowing. Binds P.aeruginosa pili. This chain is Mucin-7 (MUC7), found in Homo sapiens (Human).